A 406-amino-acid polypeptide reads, in one-letter code: Peptidase T (406 aa).

His-81 provides a ligand contact to Zn(2+). Asp-83 is a catalytic residue. Asp-142 is a Zn(2+) binding site. Catalysis depends on Glu-176, which acts as the Proton acceptor. Zn(2+) contacts are provided by Glu-177, Asp-199, and His-381.

The protein belongs to the peptidase M20B family. Zn(2+) serves as cofactor.

It localises to the cytoplasm. It catalyses the reaction Release of the N-terminal residue from a tripeptide.. In terms of biological role, cleaves the N-terminal amino acid of tripeptides. In Streptococcus pneumoniae serotype 2 (strain D39 / NCTC 7466), this protein is Peptidase T.